Reading from the N-terminus, the 305-residue chain is Protoheme IX farnesyltransferase 2 (305 aa).

7 consecutive transmembrane segments (helical) span residues 38–58 (LITTFTGMWLALHISGLSFLG), 60–80 (LNTVLLTLIGSSLIIAGSCAV), 115–135 (ILLIALGLIMLLMTTVMAAVI), 157–177 (INTVVGSVSGAVPPLIGWTAV), 181–201 (IGVVAWVLFMILFIWQIPHFL), 236–256 (VACLLPLPFFLGSLGLPIVIL), and 285–305 (FVYSLNYMTIYFVAMVVFTLF).

This sequence belongs to the UbiA prenyltransferase family. Protoheme IX farnesyltransferase subfamily. As to quaternary structure, interacts with CtaA.

Its subcellular location is the cell membrane. It carries out the reaction heme b + (2E,6E)-farnesyl diphosphate + H2O = Fe(II)-heme o + diphosphate. It participates in porphyrin-containing compound metabolism; heme O biosynthesis; heme O from protoheme: step 1/1. Its function is as follows. Converts heme B (protoheme IX) to heme O by substitution of the vinyl group on carbon 2 of heme B porphyrin ring with a hydroxyethyl farnesyl side group. The sequence is that of Protoheme IX farnesyltransferase 2 from Bacillus velezensis (strain DSM 23117 / BGSC 10A6 / LMG 26770 / FZB42) (Bacillus amyloliquefaciens subsp. plantarum).